The sequence spans 318 residues: MSVVVYAPASIGNVSVGFDVLGAAVSPIDGTLLGDRVLVELGSEAFTLATAGSFVDKLPENPKDNIVYDCWCVFSRELNKKNVALKNVHMILEKNMPIGSGLGSSACSIVAALDALNQFHDNPLNDMELLALMGEMEGQISGGIHYDNVAPCYLGGLQLMVEELGIISQEVPCFDEWYWVMAYPGIKVSTAEAREILPSQYRRQDVIAHGRNLAGFIHACYSKQPELAAKMIKDVVAEPYRERLLPNFAKAREYAASAGALTTGISGSGPTLFSICKDKDVADRVSRWLQENYVQNNEGFVHVCRLDKQGSQVTGSKL.

ATP is bound at residue 97 to 107 (PIGSGLGSSAC).

It belongs to the GHMP kinase family. Homoserine kinase subfamily.

Its subcellular location is the cytoplasm. It catalyses the reaction L-homoserine + ATP = O-phospho-L-homoserine + ADP + H(+). The protein operates within amino-acid biosynthesis; L-threonine biosynthesis; L-threonine from L-aspartate: step 4/5. Functionally, catalyzes the ATP-dependent phosphorylation of L-homoserine to L-homoserine phosphate. In Aliivibrio fischeri (strain ATCC 700601 / ES114) (Vibrio fischeri), this protein is Homoserine kinase.